A 211-amino-acid chain; its full sequence is Protein-L-isoaspartate O-methyltransferase 2 (211 aa).

S61 is an active-site residue.

Belongs to the methyltransferase superfamily. L-isoaspartyl/D-aspartyl protein methyltransferase family.

It localises to the cytoplasm. It carries out the reaction [protein]-L-isoaspartate + S-adenosyl-L-methionine = [protein]-L-isoaspartate alpha-methyl ester + S-adenosyl-L-homocysteine. Functionally, catalyzes the methyl esterification of L-isoaspartyl residues in peptides and proteins that result from spontaneous decomposition of normal L-aspartyl and L-asparaginyl residues. It plays a role in the repair and/or degradation of damaged proteins. In Polaromonas sp. (strain JS666 / ATCC BAA-500), this protein is Protein-L-isoaspartate O-methyltransferase 2.